Reading from the N-terminus, the 520-residue chain is NAD(P)H-quinone oxidoreductase subunit 2 (520 aa).

The next 14 helical transmembrane spans lie at 26 to 46, 54 to 74, 91 to 111, 120 to 140, 144 to 164, 179 to 199, 220 to 240, 252 to 272, 288 to 308, 314 to 334, 342 to 362, 386 to 406, 421 to 441, and 474 to 494; these read AVLP…VDLA, WSPP…AMQW, LAIA…LISW, PIGE…LLCG, LVSV…LSGY, LLVG…LYGI, SALA…AVPF, PTPV…ALAI, LLFT…ALAQ, MLAY…VCGT, VLYM…IILF, LGLS…GFFG, LLVT…ISVI, and VALI…NPLF.

The protein belongs to the complex I subunit 2 family. In terms of assembly, NDH-1 can be composed of about 15 different subunits; different subcomplexes with different compositions have been identified which probably have different functions.

The protein resides in the cellular thylakoid membrane. The catalysed reaction is a plastoquinone + NADH + (n+1) H(+)(in) = a plastoquinol + NAD(+) + n H(+)(out). The enzyme catalyses a plastoquinone + NADPH + (n+1) H(+)(in) = a plastoquinol + NADP(+) + n H(+)(out). Its function is as follows. NDH-1 shuttles electrons from an unknown electron donor, via FMN and iron-sulfur (Fe-S) centers, to quinones in the respiratory and/or the photosynthetic chain. The immediate electron acceptor for the enzyme in this species is believed to be plastoquinone. Couples the redox reaction to proton translocation, and thus conserves the redox energy in a proton gradient. Cyanobacterial NDH-1 also plays a role in inorganic carbon-concentration. This is NAD(P)H-quinone oxidoreductase subunit 2 from Prochlorococcus marinus (strain NATL2A).